A 518-amino-acid polypeptide reads, in one-letter code: GMP synthase [glutamine-hydrolyzing] (518 aa).

Positions 13-203 (KIIVLDFGSQ…ALNICGCKGD (191 aa)) constitute a Glutamine amidotransferase type-1 domain. The Nucleophile role is filled by C90. Active-site residues include H177 and E179. A GMPS ATP-PPase domain is found at 204 to 393 (WTMENFSEVE…LGMPDAIVWR (190 aa)). 231 to 237 (SGGVDSS) contributes to the ATP binding site.

Homodimer.

It catalyses the reaction XMP + L-glutamine + ATP + H2O = GMP + L-glutamate + AMP + diphosphate + 2 H(+). It participates in purine metabolism; GMP biosynthesis; GMP from XMP (L-Gln route): step 1/1. Catalyzes the synthesis of GMP from XMP. This Listeria innocua serovar 6a (strain ATCC BAA-680 / CLIP 11262) protein is GMP synthase [glutamine-hydrolyzing].